The sequence spans 1300 residues: Zinc finger protein 536 (1300 aa).

Disordered regions lie at residues 1-26 (MEEA…GPVL) and 47-77 (FPEL…GQPM). Positions 48 to 69 (PELHPRPNPEEKPPASLEEKAH) are enriched in basic and acidic residues. 6 C2H2-type zinc fingers span residues 130 to 152 (YPCP…MRTH), 158 to 180 (FKCP…LRTH), 274 to 297 (FRCT…RILH), 300 to 323 (YKCT…EKAH), 345 to 367 (FRCE…MRKH), and 373 to 395 (HCCQ…MKVH). 2 disordered regions span residues 584-604 (HSTK…LESS) and 650-739 (SRVH…QQPA). A compositionally biased stretch (basic and acidic residues) spans 594–604 (LPSKLDPLESS). Residues 631–653 (TECPDCGRVFRTYHQVVVHSRVH) form a C2H2-type 7 zinc finger. A compositionally biased stretch (basic and acidic residues) spans 657 to 674 (RKGEEDGLHVGLDERRGS). Over residues 675 to 696 (GSDQESQSVSRSTTPGSSNVTE) the composition is skewed to polar residues. 2 consecutive C2H2-type zinc fingers follow at residues 751–773 (KDCP…LRIH) and 779–801 (YKCP…LERH). The tract at residues 802 to 826 (HRERQNGAGPLSGQPPNQDHKDEMS) is disordered. Phosphoserine is present on residues Ser-826 and Ser-827. Over residues 856–880 (SQQWTSGVLSSGDHSGQATGMSSEV) the composition is skewed to polar residues. Disordered regions lie at residues 856-893 (SQQW…LPSK), 937-985 (KDKA…PDAA), and 1124-1260 (SGAS…SLDK). 2 stretches are compositionally biased toward basic and acidic residues: residues 950 to 972 (HGVD…EKSQ) and 1133 to 1143 (KEPDGKAHSEE). Acidic residues-rich tracts occupy residues 1160–1170 (DLSDIASSEDM) and 1178–1187 (NDEEDVETEP). The span at 1194-1209 (LSALSKDSSSDGGDSL) shows a compositional bias: low complexity.

Belongs to the krueppel C2H2-type zinc-finger protein family.

The protein resides in the nucleus. In terms of biological role, transcriptional repressor that negatively regulates neuron differentiation by repressing retinoic acid-induced gene transcription. Binds and interrupts RARA from binding to retinoic acid response elements (RARE) composed of tandem 5'-AGGTCA-3' sites known as DR1-DR5. Recognizes and binds 2 copies of the core DNA sequence 5'-CCCCCA-3'. This is Zinc finger protein 536 (ZNF536) from Homo sapiens (Human).